We begin with the raw amino-acid sequence, 147 residues long: Monothiol glutaredoxin-S5 (147 aa).

Residues 49-146 form the Glutaredoxin domain; the sequence is AAEVRRAVAE…PILKKAGALW (98 aa). A [2Fe-2S] cluster-binding site is contributed by C69. Positions 144–147 match the Responsive for interaction with TGA factors motif; that stretch reads ALWL.

Belongs to the glutaredoxin family. CC-type subfamily.

Its subcellular location is the cytoplasm. The protein resides in the nucleus. In terms of biological role, may only reduce GSH-thiol disulfides, but not protein disulfides. The polypeptide is Monothiol glutaredoxin-S5 (GRXS5) (Oryza sativa subsp. japonica (Rice)).